Here is an 88-residue protein sequence, read N- to C-terminus: UPF0297 protein str1959 (88 aa).

This sequence belongs to the UPF0297 family.

This is UPF0297 protein str1959 from Streptococcus thermophilus (strain CNRZ 1066).